The chain runs to 334 residues: Porphobilinogen deaminase (334 aa).

Position 255 is an S-(dipyrrolylmethanemethyl)cysteine (Cys255).

It belongs to the HMBS family. In terms of assembly, monomer. The cofactor is dipyrromethane.

The catalysed reaction is 4 porphobilinogen + H2O = hydroxymethylbilane + 4 NH4(+). It functions in the pathway porphyrin-containing compound metabolism; protoporphyrin-IX biosynthesis; coproporphyrinogen-III from 5-aminolevulinate: step 2/4. Its function is as follows. Tetrapolymerization of the monopyrrole PBG into the hydroxymethylbilane pre-uroporphyrinogen in several discrete steps. This is Porphobilinogen deaminase from Burkholderia orbicola (strain MC0-3).